The sequence spans 192 residues: Thymidine kinase (192 aa).

ATP is bound by residues 9–16 (STMNAGKS) and 87–90 (DEAQ). Residue Glu88 is the Proton acceptor of the active site. Residues Cys145, Cys147, Cys182, and His185 each coordinate Zn(2+).

The protein belongs to the thymidine kinase family. Homotetramer.

The protein localises to the cytoplasm. The enzyme catalyses thymidine + ATP = dTMP + ADP + H(+). This chain is Thymidine kinase, found in Pasteurella multocida (strain Pm70).